The following is a 99-amino-acid chain: Glycine-rich protein (99 aa).

The signal sequence occupies residues 1 to 18; the sequence is MKSMIAVLLLALVATSMA.

Belongs to the non-disulfide-bridged peptide (NDBP) superfamily. Expressed by the venom gland.

The protein resides in the secreted. The polypeptide is Glycine-rich protein (Lychas mucronatus (Chinese swimming scorpion)).